We begin with the raw amino-acid sequence, 380 residues long: Palmitoyltransferase ZDHHC20 (380 aa).

Residues 1 to 14 (MAPWTLWRCCQRVV) lie on the Cytoplasmic side of the membrane. The chain crosses the membrane as a helical span at residues 15 to 35 (GWVPVLFITFVVVWSYYAYVV). The Lumenal segment spans residues 36-53 (ELCVSTISRTGEKGKTVV). The chain crosses the membrane as a helical span at residues 54 to 74 (YLVAFHLFFVMFVWSYWMTIF). Residues 75-169 (TSPASPSKEF…NNCVGFTNYK (95 aa)) lie on the Cytoplasmic side of the membrane. A DHHC domain is found at 126–176 (RYCEKCQLIKPDRAHHCSACDRCVLKMDHHCPWVNNCVGFTNYKFFMLFLL). The Zn(2+) site is built by cysteine 128 and cysteine 131. Substrate-binding positions include lysine 135 and 140 to 143 (HHCS). Zn(2+)-binding residues include histidine 141, cysteine 142, cysteine 145, cysteine 148, and histidine 155. Cysteine 156 (S-palmitoyl cysteine intermediate) is an active-site residue. Cysteine 162 lines the Zn(2+) pocket. Residues 170 to 190 (FFMLFLLYSLLYCLFVAATVL) traverse the membrane as a helical segment. Residues 191 to 222 (EYFIKFWTLCRRKSTENCPKNEPTVLNFPSAK) are Lumenal-facing. Residues 223–246 (FHVLFLFFVSAMFFVSVLSLFSYH) form a helical membrane-spanning segment. The Cytoplasmic portion of the chain corresponds to 247 to 380 (CWLVGKNRTT…NNHVTVEIEN (134 aa)). Phosphoserine occurs at positions 320, 345, and 354.

The protein belongs to the DHHC palmitoyltransferase family. In terms of processing, autopalmitoylated (in vitro). In terms of tissue distribution, highest levels in lung.

The protein resides in the golgi apparatus membrane. The protein localises to the cell membrane. Its subcellular location is the cytoplasm. It localises to the perinuclear region. It is found in the endoplasmic reticulum membrane. The protein resides in the endoplasmic reticulum-Golgi intermediate compartment membrane. The enzyme catalyses L-cysteinyl-[protein] + hexadecanoyl-CoA = S-hexadecanoyl-L-cysteinyl-[protein] + CoA. It catalyses the reaction L-cysteinyl-[protein] + tetradecanoyl-CoA = S-tetradecanoyl-L-cysteinyl-[protein] + CoA. It carries out the reaction L-cysteinyl-[protein] + octadecanoyl-CoA = S-octadecanoyl-L-cysteinyl-[protein] + CoA. Palmitoyltransferase that could catalyze the addition of palmitate onto various protein substrates. Catalyzes palmitoylation of Cys residues in the cytoplasmic C-terminus of EGFR, and modulates the duration of EGFR signaling by modulating palmitoylation-dependent EGFR internalization and degradation. Has a preference for acyl-CoA with C16 fatty acid chains. Can also utilize acyl-CoA with C14 and C18 fatty acid chains. May palmitoylate CALHM1 subunit of gustatory voltage-gated ion channels and modulate channel gating and kinetics. In Mus musculus (Mouse), this protein is Palmitoyltransferase ZDHHC20.